The primary structure comprises 855 residues: Inactive rhomboid protein 1 (855 aa).

The segment at 1–35 (MSEARRDSTSSLQRKKPPWLKLDIPSAAPATAEEP) is disordered. Residues 1–411 (MSEARRDSTS…HRPFFTYWLT (411 aa)) lie on the Cytoplasmic side of the membrane. Residues 25–35 (PSAAPATAEEP) are compositionally biased toward low complexity. Phosphoserine is present on residues Ser-76 and Ser-176. 2 positions are modified to phosphothreonine: Thr-180 and Thr-183. Residue Ser-390 is modified to Phosphoserine. The helical transmembrane segment at 412–432 (FVHSLVTILAVCIYGIAPVGF) threads the bilayer. The Lumenal portion of the chain corresponds to 433–655 (SQHETVDSVL…NPEVPDQFYR (223 aa)). Asn-583 carries an N-linked (GlcNAc...) asparagine glycan. A helical membrane pass occupies residues 656-676 (LWLSLFLHAGILHCLVSICFQ). Residues 677-691 (MTVLRDLEKLAGWHR) lie on the Cytoplasmic side of the membrane. Residues 692–712 (IAIIYLLSGVTGNLASAIFLP) form a helical membrane-spanning segment. Residues 713-714 (YR) lie on the Lumenal side of the membrane. The chain crosses the membrane as a helical span at residues 715–735 (AEVGPAGSQFGILACLFVELF). Over 736 to 746 (QSWQILARPWR) the chain is Cytoplasmic. The chain crosses the membrane as a helical span at residues 747–767 (AFFKLLAVVLFLFTFGLLPWI). Residues 768-772 (DNFAH) are Lumenal-facing. Residues 773 to 793 (ISGFISGLFLSFAFLPYISFG) form a helical membrane-spanning segment. The Cytoplasmic portion of the chain corresponds to 794–803 (KFDLYRKRCQ). A helical transmembrane segment spans residues 804–824 (IIVFQVVFLGLLAGLVVLFYV). At 825–855 (YPVRCEWCEFLTCIPFTDKFCEKYELDAQLH) the chain is on the lumenal side.

Belongs to the peptidase S54 family. As to quaternary structure, homodimer, or homooligomer. Interacts with TGFA and HBEGF. Interacts with EGF; may retain EGF in the endoplasmic reticulum and regulates its degradation through the endoplasmic reticulum-associated degradation (ERAD). Interacts (via cytoplasmic N-terminus) with FRMD8/iTAP; this interaction leads to mutual protein stabilization. Interacts with ADAM17/TACE.

It localises to the endoplasmic reticulum membrane. The protein resides in the golgi apparatus membrane. Regulates ADAM17 protease, a sheddase of the epidermal growth factor (EGF) receptor ligands and TNF, thereby plays a role in sleep, cell survival, proliferation, migration and inflammation. Does not exhibit any protease activity on its own. This Callithrix jacchus (White-tufted-ear marmoset) protein is Inactive rhomboid protein 1 (RHBDF1).